Reading from the N-terminus, the 346-residue chain is Pheromone receptor 2 (346 aa).

A run of 7 helical transmembrane segments spans residues 8–28 (VSFG…CLIH), 34–54 (IGVL…GINA), 71–94 (LSAI…LQRL), 115–135 (LIDF…FFIV), 160–180 (FIYH…AVLV), 219–239 (VLVS…GGLL), and 270–290 (LSIL…FFGL).

The protein belongs to the G-protein coupled receptor 4 family.

It localises to the membrane. Functionally, receptor for the A1 pheromone, a prenylated mating factor. This is Pheromone receptor 2 (PRA2) from Mycosarcoma maydis (Corn smut fungus).